We begin with the raw amino-acid sequence, 913 residues long: Protein translocase subunit SecA (913 aa).

ATP is bound by residues Gln87, 105–109 (GEGKT), and Asp512. Residues 864–913 (LDQPEEEPAEVEGQPDVAVASVRTEPKIGRNEPCPCGSGKKYKHCHGQVQ) form a disordered region. Zn(2+) is bound by residues Cys897, Cys899, Cys908, and His909. Positions 903-913 (KKYKHCHGQVQ) are enriched in basic residues.

It belongs to the SecA family. In terms of assembly, monomer and homodimer. Part of the essential Sec protein translocation apparatus which comprises SecA, SecYEG and auxiliary proteins SecDF-YajC and YidC. It depends on Zn(2+) as a cofactor.

The protein localises to the cell inner membrane. Its subcellular location is the cytoplasm. It carries out the reaction ATP + H2O + cellular proteinSide 1 = ADP + phosphate + cellular proteinSide 2.. Functionally, part of the Sec protein translocase complex. Interacts with the SecYEG preprotein conducting channel. Has a central role in coupling the hydrolysis of ATP to the transfer of proteins into and across the cell membrane, serving both as a receptor for the preprotein-SecB complex and as an ATP-driven molecular motor driving the stepwise translocation of polypeptide chains across the membrane. This chain is Protein translocase subunit SecA, found in Stutzerimonas stutzeri (strain A1501) (Pseudomonas stutzeri).